We begin with the raw amino-acid sequence, 547 residues long: Chaperonin GroEL (547 aa).

ATP contacts are provided by residues 30–33 (TLGP), K51, 87–91 (DGTTT), G415, 479–481 (NAA), and D495.

Belongs to the chaperonin (HSP60) family. Forms a cylinder of 14 subunits composed of two heptameric rings stacked back-to-back. Interacts with the co-chaperonin GroES.

Its subcellular location is the cytoplasm. The catalysed reaction is ATP + H2O + a folded polypeptide = ADP + phosphate + an unfolded polypeptide.. Functionally, together with its co-chaperonin GroES, plays an essential role in assisting protein folding. The GroEL-GroES system forms a nano-cage that allows encapsulation of the non-native substrate proteins and provides a physical environment optimized to promote and accelerate protein folding. The chain is Chaperonin GroEL from Pseudomonas savastanoi pv. phaseolicola (strain 1448A / Race 6) (Pseudomonas syringae pv. phaseolicola (strain 1448A / Race 6)).